Reading from the N-terminus, the 131-residue chain is Urease subunit beta (131 aa).

Residues 100–131 (PLDPAAGVTSDEDAASAVVPRGAETSEREARA) form a disordered region.

This sequence belongs to the urease beta subunit family. In terms of assembly, heterotrimer of UreA (gamma), UreB (beta) and UreC (alpha) subunits. Three heterotrimers associate to form the active enzyme.

The protein localises to the cytoplasm. It carries out the reaction urea + 2 H2O + H(+) = hydrogencarbonate + 2 NH4(+). It functions in the pathway nitrogen metabolism; urea degradation; CO(2) and NH(3) from urea (urease route): step 1/1. This is Urease subunit beta from Kocuria rhizophila (strain ATCC 9341 / DSM 348 / NBRC 103217 / DC2201).